A 138-amino-acid chain; its full sequence is Basic phospholipase A2 homolog MjTX-I (138 aa).

A signal peptide spans 1–16 (MRTLWIMAVLLVGVEG). V34 serves as a coordination point for suramin. 7 disulfide bridges follow: C42/C132, C44/C60, C59/C111, C65/C138, C66/C104, C73/C97, and C91/C102. N43 contacts varespladib. The suramin site is built by G45 and G48. Varespladib is bound by residues H63 and K64. K85 contacts suramin.

The protein belongs to the phospholipase A2 family. Group II subfamily. K49 sub-subfamily. Monomer in solution. Homodimer; non-covalently linked (probable conventional/extended dimer conformation). Homotetramer (dimer of homodimer (probable conventional/extended dimer conformation)); non-covalently linked. Homooligomer. As to expression, expressed by the venom gland.

The protein localises to the secreted. Myotoxin activity is inhibited by suramin and varespladib. Inhibition by suramin may be caused by (i) distortion of MDiS from both monomers impairing the membrane disruption mechanism by the toxin and (ii) surface electrostatic changes of the complex that interfere with the toxin membrane dockage process (putative-MDoS is partially hidden). Inhibition by varespladib is probably through varespladib binding to MDoS. Functionally, snake venom phospholipase A2 homolog that lacks enzymatic activity. In vivo, it displays local myotoxin and edema-inducing activities and is lethal by intraperitoneal injection. The myotoxicity effect is weaker in comparison to other myotoxins, probably due to the formation of high molecular weight complexes and to the oligomeric conformation (conventional dimer). It shows specificity toward neurons and myotubes, but not on a variety of other cell types. This PLA2 excites a cohort of sensory neurons via ATP release and consequent activation of P2RX2 and/or P2RX3 purinergic receptors. Pannexin hemichannels act as downstream mediators of toxin-evoked ATP release. In vivo, it elicits nonneurogenic inflammatory pain, thermal hyperalgesia, and mechanical allodynia, of which the latter is completely dependent on purinergic signaling. The protein is Basic phospholipase A2 homolog MjTX-I of Bothrops moojeni (Lance-headed viper).